The chain runs to 1001 residues: Serine/threonine-protein kinase TAO1 (1001 aa).

Ser9 bears the Phosphoserine mark. The 254-residue stretch at 28–281 folds into the Protein kinase domain; sequence FTDLREIGHG…SEELLKHMFV (254 aa). ATP contacts are provided by residues 34 to 42 and Lys57; that span reads IGHGSFGAV. Asp151 acts as the Proton acceptor in catalysis. Disordered stretches follow at residues 324-380 and 404-433; these read PAVE…DKSE and ENYQEEGDPRTRASDPQSPPQVSRHKSHYR. A compositionally biased stretch (low complexity) spans 350 to 370; it reads SNQSIPSMSISASSQSSSVNS. Phosphoserine occurs at positions 421 and 445. Positions 458–651 form a coiled coil; the sequence is SELREQMSGY…QTQKDLEHAM (194 aa). The interval 567–587 is disordered; that stretch reads KEELNENQSTPKKEKQEWLSK. Residues 577-587 show a composition bias toward basic and acidic residues; the sequence is PKKEKQEWLSK. A Phosphothreonine modification is found at Thr669. Positions 754-877 form a coiled coil; it reads KAVLKRLKEE…LERQAREIEA (124 aa). The tract at residues 905-1001 is disordered; it reads PGASSWSHNP…ISNGSHMSYT (97 aa). Residues 921–930 are compositionally biased toward low complexity; the sequence is HWGHPMGGTP. A Phosphoserine modification is found at Ser965. Positions 975–1001 are enriched in polar residues; that stretch reads GGRTEQGMSRSTSVTSQISNGSHMSYT.

This sequence belongs to the protein kinase superfamily. STE Ser/Thr protein kinase family. STE20 subfamily. In terms of assembly, self-associates. Interacts with MAP2K3. Interacts with SPRED1. Interacts with TESK1; the interaction inhibits TAOK1 kinase activity. Interacts with MAP3K7. In terms of processing, proteolytically processed by caspase-3 (CASP3). Post-translationally, autophosphorylated. Phosphorylated by ATM in response to DNA damage. Phosphorylated by LRRK2.

It is found in the cytoplasm. It carries out the reaction L-seryl-[protein] + ATP = O-phospho-L-seryl-[protein] + ADP + H(+). It catalyses the reaction L-threonyl-[protein] + ATP = O-phospho-L-threonyl-[protein] + ADP + H(+). With respect to regulation, serine/threonine-protein kinase activity is inhibited by SPRED1. Serine/threonine-protein kinase involved in various processes such as p38/MAPK14 stress-activated MAPK cascade, DNA damage response and regulation of cytoskeleton stability. Phosphorylates MAP2K3, MAP2K6 and MARK2. Acts as an activator of the p38/MAPK14 stress-activated MAPK cascade by mediating phosphorylation and subsequent activation of the upstream MAP2K3 and MAP2K6 kinases. Involved in G-protein coupled receptor signaling to p38/MAPK14. In response to DNA damage, involved in the G2/M transition DNA damage checkpoint by activating the p38/MAPK14 stress-activated MAPK cascade, probably by mediating phosphorylation of MAP2K3 and MAP2K6. Acts as a regulator of cytoskeleton stability by phosphorylating 'Thr-208' of MARK2, leading to activate MARK2 kinase activity and subsequent phosphorylation and detachment of MAPT/TAU from microtubules. Also acts as a regulator of apoptosis: regulates apoptotic morphological changes, including cell contraction, membrane blebbing and apoptotic bodies formation via activation of the MAPK8/JNK cascade. During fetal development, it plays an essential role in the regulation of neuronal differentiation and migration to the cortical plate. The polypeptide is Serine/threonine-protein kinase TAO1 (Taok1) (Mus musculus (Mouse)).